The chain runs to 678 residues: DNA ligase (678 aa).

NAD(+) is bound by residues 35-39 (DEEYD), 84-85 (SL), and E115. K117 acts as the N6-AMP-lysine intermediate in catalysis. Positions 138, 172, 288, and 312 each coordinate NAD(+). Zn(2+) is bound by residues C406, C409, C425, and C430. In terms of domain architecture, BRCT spans 589-678 (VQSKILSNLT…IKNLRQQKLF (90 aa)).

This sequence belongs to the NAD-dependent DNA ligase family. LigA subfamily. Mg(2+) serves as cofactor. It depends on Mn(2+) as a cofactor.

The catalysed reaction is NAD(+) + (deoxyribonucleotide)n-3'-hydroxyl + 5'-phospho-(deoxyribonucleotide)m = (deoxyribonucleotide)n+m + AMP + beta-nicotinamide D-nucleotide.. Its function is as follows. DNA ligase that catalyzes the formation of phosphodiester linkages between 5'-phosphoryl and 3'-hydroxyl groups in double-stranded DNA using NAD as a coenzyme and as the energy source for the reaction. It is essential for DNA replication and repair of damaged DNA. The sequence is that of DNA ligase from Pseudothermotoga lettingae (strain ATCC BAA-301 / DSM 14385 / NBRC 107922 / TMO) (Thermotoga lettingae).